We begin with the raw amino-acid sequence, 1844 residues long: ATPase family AAA domain-containing protein 5 (1844 aa).

At Ser44 the chain carries Phosphoserine. Residue Lys127 forms a Glycyl lysine isopeptide (Lys-Gly) (interchain with G-Cter in SUMO2) linkage. A compositionally biased stretch (polar residues) spans 178-199 (QPNTMTSLQNSKKVNPKQGTTK). Positions 178–204 (QPNTMTSLQNSKKVNPKQGTTKNDFKK) are disordered. Phosphoserine is present on residues Ser219, Ser306, Ser311, Ser354, and Ser369. The segment at 368-384 (KSNVVIQEEELELAVLE) is interaction with WDR48. 3 disordered regions span residues 477 to 499 (KLKKKNKKTLDTGAIPGKNREGN), 580 to 623 (ESEA…NSQL), and 658 to 700 (KFTR…SKNI). Polar residues-rich tracts occupy residues 580–592 (ESEASLLNVSTPK) and 599–608 (RISSTPTTET). Residues Ser602, Ser614, and Ser621 each carry the phosphoserine modification. The segment covering 664–673 (TPKKSKKKSN) has biased composition (basic residues). The segment covering 685 to 700 (GFTSQIRKASNTSKNI) has biased composition (polar residues). Ser817 is subject to Phosphoserine. 2 stretches are compositionally biased toward basic and acidic residues: residues 987-1032 (LEAD…ELSK) and 1092-1106 (RQNLKGKRDEKHEDF). 2 disordered regions span residues 987–1047 (LEAD…SKDS) and 1092–1118 (RQNLKGKRDEKHEDFSGGIDFKGSSDD). Ser1116 bears the Phosphoserine mark. 1132-1139 (GPTGVGKT) is an ATP binding site. Disordered stretches follow at residues 1203-1235 (KKISSPKKVVTSPRKVPPPSPKSSGPKRALPPK) and 1272-1292 (ITQTKSTNATNSNVKDVGAEE). Positions 1272-1285 (ITQTKSTNATNSNV) are enriched in polar residues. The LXCXE motif motif lies at 1428–1432 (LVCSE). A disordered region spans residues 1591–1635 (SLSSVSSSSNAEESKTGDEESKARDKGNNPETKKSIPCPPKTTAG). A compositionally biased stretch (basic and acidic residues) spans 1602 to 1624 (EESKTGDEESKARDKGNNPETKK). The interaction with RAD51 and RFC5 stretch occupies residues 1630–1719 (PKTTAGKKCS…AAAEALSFTK (90 aa)).

It belongs to the AAA ATPase family. In terms of assembly, component of a heteropentameric replication factor ATAD5 RFC-like complex composed of one large subunit (ATAD5) and four small subunits (RFC2, RFC3, RFC4 and RFC5). Within the ATAD5 RFC-like complex, interacts with RFC2, RFC4 and RFC5. Within the ATAD5 RFC-like complex, interacts directly via-N terminal with RAD51; the interactions is enhanced under replication stress. Interacts with RB1 predominantly in G1 phase via its LXCXE motif. Interacts with RAD9A in growing cells. The interaction with RAD9A is reduced after exposure to DNA replication-inhibiting agents. Interacts with BRD4. Interacts with PCNA. Interacts with deubiquitinating enzyme USP1, and its associated factor, WDR48. ATR may stimulate the RAD9A dissociation.

The protein resides in the nucleus. In terms of biological role, has an important role in DNA replication and in maintaining genome integrity during replication stress. Involved in a RAD9A-related damage checkpoint, a pathway that is important in determining whether DNA damage is compatible with cell survival or whether it requires cell elimination by apoptosis. Modulates the RAD9A interaction with BCL2 and thereby induces DNA damage-induced apoptosis. Promotes PCNA deubiquitination by recruiting the ubiquitin-specific protease 1 (USP1) and WDR48 thereby down-regulating the error-prone damage bypass pathway. As component of the ATAD5 RFC-like complex, regulates the function of the DNA polymerase processivity factor PCNA by unloading the ring-shaped PCNA homotrimer from DNA after replication during the S phase of the cell cycle. This seems to be dependent on its ATPase activity. Plays important roles in restarting stalled replication forks under replication stress, by unloading the PCNA homotrimer from DNA and recruiting RAD51 possibly through an ATR-dependent manner. Ultimately this enables replication fork regression, breakage, and eventual fork restart. Both the PCNA unloading activity and the interaction with WDR48 are required to efficiently recruit RAD51 to stalled replication forks. Promotes the generation of MUS81-mediated single-stranded DNA-associated breaks in response to replication stress, which is an alternative pathway to restart stalled/regressed replication forks. This chain is ATPase family AAA domain-containing protein 5, found in Homo sapiens (Human).